The chain runs to 324 residues: Phospho-N-acetylmuramoyl-pentapeptide-transferase (324 aa).

Helical transmembrane passes span 5–25 (GLLV…PLFI), 52–72 (PTMG…IMAI), 77–97 (LGAE…IGFL), 117–137 (LLGQ…QGFD), 147–167 (ITFD…IGGS), 176–196 (LDGL…IIAV), 202–222 (AVAI…VFNA), 227–247 (VFMG…VAIL), 253–273 (LLVI…IQVI), and 302–322 (VVVT…YIGV).

This sequence belongs to the glycosyltransferase 4 family. MraY subfamily. Mg(2+) is required as a cofactor.

It is found in the cell membrane. The catalysed reaction is UDP-N-acetyl-alpha-D-muramoyl-L-alanyl-gamma-D-glutamyl-meso-2,6-diaminopimeloyl-D-alanyl-D-alanine + di-trans,octa-cis-undecaprenyl phosphate = di-trans,octa-cis-undecaprenyl diphospho-N-acetyl-alpha-D-muramoyl-L-alanyl-D-glutamyl-meso-2,6-diaminopimeloyl-D-alanyl-D-alanine + UMP. Its pathway is cell wall biogenesis; peptidoglycan biosynthesis. In terms of biological role, catalyzes the initial step of the lipid cycle reactions in the biosynthesis of the cell wall peptidoglycan: transfers peptidoglycan precursor phospho-MurNAc-pentapeptide from UDP-MurNAc-pentapeptide onto the lipid carrier undecaprenyl phosphate, yielding undecaprenyl-pyrophosphoryl-MurNAc-pentapeptide, known as lipid I. The sequence is that of Phospho-N-acetylmuramoyl-pentapeptide-transferase from Bacillus cytotoxicus (strain DSM 22905 / CIP 110041 / 391-98 / NVH 391-98).